We begin with the raw amino-acid sequence, 182 residues long: Peptidyl-prolyl cis-trans isomerase H (182 aa).

Positions 15–181 constitute a PPIase cyclophilin-type domain; the sequence is FFDITIGGEP…LDVVISQCGE (167 aa).

It belongs to the cyclophilin-type PPIase family. PPIase H subfamily.

The protein resides in the nucleus. It carries out the reaction [protein]-peptidylproline (omega=180) = [protein]-peptidylproline (omega=0). Functionally, PPIases accelerate the folding of proteins. It catalyzes the cis-trans isomerization of proline imidic peptide bonds in oligopeptides. The sequence is that of Peptidyl-prolyl cis-trans isomerase H (CYP3) from Gibberella zeae (strain ATCC MYA-4620 / CBS 123657 / FGSC 9075 / NRRL 31084 / PH-1) (Wheat head blight fungus).